Consider the following 310-residue polypeptide: MVSDWKNFCLEKASRFRPTIDRPFFNIYLWDYFNRAVGWATAGRFQPKDFEFTVGKQPLSEPRPVLLFIAMYYVVIFGGRSLVKSCKPLKLRFISQVHNLMLTSVSFLWLILMVEQMLPIVYRHGLYFAVCNVESWTQPMETLYYLNYMTKFVEFADTVLMVLKHRKLTFLHTYHHGATALLCYNQLVGYTAVTWVPVTLNLAVHVLMYWYYFLSASGIRVWWKAWVTRLQIVQFMLDLIVVYYVLYQKIVAAYFKNACTPQCEDCLGSMTAIAAGAAILTSYLFLFISFYIEVYKRGSASGKKKINKNN.

At 1–63 the chain is on the lumenal side; sequence MVSDWKNFCL…VGKQPLSEPR (63 aa). A helical membrane pass occupies residues 64–84; sequence PVLLFIAMYYVVIFGGRSLVK. Topologically, residues 85-100 are cytoplasmic; that stretch reads SCKPLKLRFISQVHNL. The helical transmembrane segment at 101-121 threads the bilayer; the sequence is MLTSVSFLWLILMVEQMLPIV. Residues 122-141 are Lumenal-facing; sequence YRHGLYFAVCNVESWTQPME. The chain crosses the membrane as a helical span at residues 142 to 163; sequence TLYYLNYMTKFVEFADTVLMVL. The Cytoplasmic segment spans residues 164 to 174; it reads KHRKLTFLHTY. The HxxHH motif signature appears at 172-176; the sequence is HTYHH. The helical transmembrane segment at 175-196 threads the bilayer; that stretch reads HHGATALLCYNQLVGYTAVTWV. Residues 197-201 lie on the Lumenal side of the membrane; the sequence is PVTLN. The chain crosses the membrane as a helical span at residues 202–223; the sequence is LAVHVLMYWYYFLSASGIRVWW. The Cytoplasmic portion of the chain corresponds to 224 to 234; it reads KAWVTRLQIVQ. Residues 235 to 255 form a helical membrane-spanning segment; that stretch reads FMLDLIVVYYVLYQKIVAAYF. Over 256–271 the chain is Lumenal; it reads KNACTPQCEDCLGSMT. The helical transmembrane segment at 272–292 threads the bilayer; sequence AIAAGAAILTSYLFLFISFYI. Residues 293 to 310 lie on the Cytoplasmic side of the membrane; the sequence is EVYKRGSASGKKKINKNN. The short motif at 304–307 is the Di-lysine motif element; that stretch reads KKIN.

This sequence belongs to the ELO family.

The protein localises to the endoplasmic reticulum membrane. It catalyses the reaction a very-long-chain acyl-CoA + malonyl-CoA + H(+) = a very-long-chain 3-oxoacyl-CoA + CO2 + CoA. It carries out the reaction tetradecanoyl-CoA + malonyl-CoA + H(+) = 3-oxohexadecanoyl-CoA + CO2 + CoA. The catalysed reaction is (9Z)-tetradecenoyl-CoA + malonyl-CoA + H(+) = 3-oxo-(11Z)-hexadecenoyl-CoA + CO2 + CoA. In terms of biological role, component of a microsomal membrane bound medium-chain fatty acid elongation system, which extends medium-chain-length fatty acids to long-chain fatty acids. Component of elongase I, which extends 12-16-carbon fatty acyl-CoAs such as lauroyl-CoA to 14-18-carbon fatty acids by incorporation of malonyl-CoA. This chain is Fatty acid elongase 1, found in Saccharomyces cerevisiae (strain ATCC 204508 / S288c) (Baker's yeast).